We begin with the raw amino-acid sequence, 477 residues long: Asparaginyl-tRNA synthetase (477 aa).

A mitochondrion-targeting transit peptide spans 1–14 (MLGVRCLLRSVRFC). Position 353 is an N6-acetyllysine (K353).

This sequence belongs to the class-II aminoacyl-tRNA synthetase family. As to quaternary structure, homodimer.

The protein localises to the mitochondrion matrix. It localises to the mitochondrion. The enzyme catalyses tRNA(Asn) + L-asparagine + ATP = L-asparaginyl-tRNA(Asn) + AMP + diphosphate + H(+). Mitochondrial aminoacyl-tRNA synthetase that catalyzes the specific attachment of the asparagine amino acid (aa) to the homologous transfer RNA (tRNA), further participating in protein synthesis. The reaction occurs in a two steps: asparagine is first activated by ATP to form Asn-AMP and then transferred to the acceptor end of tRNA(Asn). This is Asparaginyl-tRNA synthetase from Homo sapiens (Human).